A 123-amino-acid chain; its full sequence is DNA-directed RNA polymerase I subunit RPA12 (123 aa).

The Zn(2+) site is built by cysteine 17, cysteine 20, cysteine 35, cysteine 38, cysteine 84, and cysteine 87. Residues 17 to 38 (CPDCGSVLPLPGVQDTVICPRC) form a C4-type zinc finger. The TFIIS-type zinc finger occupies 80–120 (VDRRCSRCGHEGMAYYTRQMRSADEGQTVFYTCINCKFQEK). Residues 103–104 (DE) carry the Hairpin motif. Zn(2+)-binding residues include cysteine 112 and cysteine 115.

It belongs to the archaeal RpoM/eukaryotic RPA12/RPB9/RPC11 RNA polymerase family. In terms of assembly, component of the RNA polymerase I (Pol I) complex consisting of 13 subunits: a ten-subunit catalytic core composed of POLR1A/RPA1, POLR1B/RPA2, POLR1C/RPAC1, POLR1D/RPAC2, POLR1H/RPA12, POLR2E/RPABC1, POLR2F/RPABC2, POLR2H/RPABC3, POLR2K/RPABC4 and POLR2L/RPABC5; a mobile stalk subunit POLR1F/RPA43 protruding from the core and additional subunits homologous to general transcription factors POLR1E/RPA49 and POLR1G/RPA34. Part of Pol I pre-initiation complex (PIC), in which Pol I core assembles with RRN3 and promoter-bound UTBF and SL1/TIF-IB complex.

Its subcellular location is the nucleus. It localises to the nucleolus. Core component of RNA polymerase I (Pol I), a DNA-dependent RNA polymerase which synthesizes ribosomal RNA precursors using the four ribonucleoside triphosphates as substrates. Can mediate Pol I proofreading of the nascent RNA transcript. Anchors into the Pol I active site to monitor transcription fidelity and cleave mis-incorporated 5'-ribonucleotides. The protein is DNA-directed RNA polymerase I subunit RPA12 of Rattus norvegicus (Rat).